A 463-amino-acid polypeptide reads, in one-letter code: Serine/threonine-protein kinase tricornered (463 aa).

Residues 93–394 enclose the Protein kinase domain; the sequence is FEALKVIGRG…LEDLKSVPFF (302 aa). ATP is bound by residues 99–107 and Lys122; that span reads IGRGAFGEV. The tract at residues 119–180 is interaction with mats and Mob1; that stretch reads YAMKVLRKAD…EFLPGGDMMT (62 aa). Asp216 serves as the catalytic Proton acceptor. Position 292 is a phosphoserine (Ser292). An AGC-kinase C-terminal domain is found at 395–463; it reads RGVDWEHIRE…YKRFEVRNLE (69 aa). Thr453 carries the phosphothreonine modification.

It belongs to the protein kinase superfamily. AGC Ser/Thr protein kinase family. In terms of assembly, interacts with, and is activated by, Mob1. Mg(2+) is required as a cofactor. As to expression, expressed in the peripheral and central nervous system (at protein level). Expressed in the wing imaginal disk.

It is found in the cytoplasm. Its subcellular location is the nucleus. It catalyses the reaction L-seryl-[protein] + ATP = O-phospho-L-seryl-[protein] + ADP + H(+). It carries out the reaction L-threonyl-[protein] + ATP = O-phospho-L-threonyl-[protein] + ADP + H(+). With respect to regulation, activated by fry. Functionally, serine/threonine-protein kinase involved in controlling cell structure and proliferation of a variety of polarized outgrowths including epidermal hairs, bristles, arista laterals, and dendrites. Together with fry, maintains the integrity of epidermal hairs and is an essential component of the signaling pathway regulating dendritic branching of sensory neurons. Reduces neurite outgrowth by phosphorylating pav, thereby inhibiting its function in microtubule-microtubule sliding. This chain is Serine/threonine-protein kinase tricornered, found in Drosophila melanogaster (Fruit fly).